The following is a 256-amino-acid chain: uncharacterized protein (256 aa).

This is an uncharacterized protein from Saccharomyces cerevisiae (strain ATCC 204508 / S288c) (Baker's yeast).